The following is a 181-amino-acid chain: Adenine phosphoribosyltransferase (181 aa).

It belongs to the purine/pyrimidine phosphoribosyltransferase family. In terms of assembly, homodimer.

The protein resides in the cytoplasm. It catalyses the reaction AMP + diphosphate = 5-phospho-alpha-D-ribose 1-diphosphate + adenine. It participates in purine metabolism; AMP biosynthesis via salvage pathway; AMP from adenine: step 1/1. Catalyzes a salvage reaction resulting in the formation of AMP, that is energically less costly than de novo synthesis. The polypeptide is Adenine phosphoribosyltransferase (Vibrio campbellii (strain ATCC BAA-1116)).